Here is a 554-residue protein sequence, read N- to C-terminus: Formate--tetrahydrofolate ligase (554 aa).

65 to 72 is a binding site for ATP; sequence TPLGEGKT.

It belongs to the formate--tetrahydrofolate ligase family.

The catalysed reaction is (6S)-5,6,7,8-tetrahydrofolate + formate + ATP = (6R)-10-formyltetrahydrofolate + ADP + phosphate. It functions in the pathway one-carbon metabolism; tetrahydrofolate interconversion. This is Formate--tetrahydrofolate ligase from Aliivibrio salmonicida (strain LFI1238) (Vibrio salmonicida (strain LFI1238)).